A 208-amino-acid chain; its full sequence is Guanylate kinase (208 aa).

One can recognise a Guanylate kinase-like domain in the interval 4–184 (GTLYIVSAPS…ALMDFKAIIR (181 aa)). Position 11–18 (11–18 (APSGAGKS)) interacts with ATP.

It belongs to the guanylate kinase family.

It is found in the cytoplasm. The catalysed reaction is GMP + ATP = GDP + ADP. Its function is as follows. Essential for recycling GMP and indirectly, cGMP. The polypeptide is Guanylate kinase (Photobacterium profundum (strain SS9)).